Reading from the N-terminus, the 58-residue chain is Large ribosomal subunit protein uL30 (58 aa).

Belongs to the universal ribosomal protein uL30 family. As to quaternary structure, part of the 50S ribosomal subunit.

The sequence is that of Large ribosomal subunit protein uL30 from Pelobacter propionicus (strain DSM 2379 / NBRC 103807 / OttBd1).